We begin with the raw amino-acid sequence, 862 residues long: Cadherin-related family member 5 (862 aa).

Positions 1–28 (MGAPALLWPPLLLPLLTVLFGHLPGTLA) are cleaved as a signal peptide. Residues 29 to 671 (QAQVCSANQT…GQRFSTVDMA (643 aa)) are Extracellular-facing. 9 N-linked (GlcNAc...) asparagine glycosylation sites follow: Asn-36, Asn-45, Asn-135, Asn-173, Asn-201, Asn-311, Asn-408, Asn-438, and Asn-479. 4 consecutive Cadherin domains span residues 40–127 (FTMN…APEF), 128–240 (PFTI…TPWF), 252–357 (IQAQ…PLQF), and 358–462 (SQSL…PPST). Positions 452 to 658 (IQVSEREPPS…TTGPISGVGE (207 aa)) are disordered. Low complexity predominate over residues 461 to 500 (STESPTPPEAGGTTGPSSNTTLETPSTSGTSQGPATTSSG). The segment covering 529-652 (LGISTSPQTA…GTSQPTTTGP (124 aa)) has biased composition (polar residues). 3 consecutive repeat copies span residues 545-575 (TQTPKPGTSQPMVPTPGASTSSQPATPSGSS), 576-606 (TQTPKPGTSQPMVPTPGASTSSQPATPSGSS), and 607-636 (TQTPRPGTSQPMVPTPGASTSSQPATPSGS). Residues 545–648 (TQTPKPGTSQ…TPKPGTSQPT (104 aa)) form a 4 X 31 AA approximate tandem repeats region. A 4; truncated repeat occupies 637-648 (TQTPKPGTSQPT). A helical membrane pass occupies residues 672-692 (VLGGVLGALLLLALIFLIILI). Over 693 to 862 (HKHYRHRFTC…LGAVADNTYV (170 aa)) the chain is Cytoplasmic. The interval 693–862 (HKHYRHRFTC…LGAVADNTYV (170 aa)) is mediates interaction with USH1C and MYO7B and is required for proper localization to microvilli tips and function in microvilli organization. 2 disordered regions span residues 706 to 803 (KAKE…EGGY) and 821 to 862 (LNEP…NTYV). A phosphoserine mark is found at Ser-729, Ser-751, and Ser-755. Over residues 739-768 (GPEPVQPPLRPPSPMSSSPTPPSSMPPSPQ) the composition is skewed to pro residues. Thr-758 bears the Phosphothreonine mark. Residues Ser-766 and Ser-783 each carry the phosphoserine modification. Positions 791–801 (LTKERRPEGEG) are enriched in basic and acidic residues. Residue Thr-825 is modified to Phosphothreonine. Low complexity predominate over residues 827–837 (DVDSASASGSE). Phosphoserine is present on residues Ser-832, Ser-834, and Ser-836.

Part of the IMAC/intermicrovillar adhesion complex/intermicrovillar tip-link complex composed of ANKS4B, MYO7B, USH1C, CDHR2 and CDHR5. Interacts (via cytoplasmic domain) with USH1C and MYO7B; required for proper localization of CDHR5 to microvilli tips and its function in brush border differentiation. N- and O-glycosylated. Expressed predominantly in kidney. Also detected in lung and small intestine.

It is found in the apical cell membrane. It localises to the cell projection. The protein localises to the microvillus membrane. In terms of biological role, intermicrovillar adhesion molecule that forms, via its extracellular domain, calcium-dependent heterophilic complexes with CDHR2 on adjacent microvilli. Thereby, controls the packing of microvilli at the apical membrane of epithelial cells. Through its cytoplasmic domain, interacts with microvillus cytoplasmic proteins to form the intermicrovillar adhesion complex/IMAC. This complex plays a central role in microvilli and epithelial brush border differentiation. This Rattus norvegicus (Rat) protein is Cadherin-related family member 5.